Here is a 516-residue protein sequence, read N- to C-terminus: Nucleolar complex protein 4 homolog (516 aa).

3 consecutive transmembrane segments (helical) span residues 296–316, 347–367, and 375–395; these read SACD…FILI, FFHL…LVAA, and LALT…CNLL.

It belongs to the CBF/MAK21 family.

The protein localises to the nucleus membrane. It is found in the nucleus. It localises to the nucleolus. This Rattus norvegicus (Rat) protein is Nucleolar complex protein 4 homolog (Noc4l).